Consider the following 403-residue polypeptide: RILP-like protein 1 (403 aa).

Ser-7 bears the Phosphoserine mark. The RH1 domain maps to 10–97 (AAESALEKNV…RLERMDRIEK (88 aa)). Cys-47 bears the S-nitrosocysteine mark. Residues 76–258 (ELDELRLELD…KLRERLQGEH (183 aa)) adopt a coiled-coil conformation. 3 disordered regions span residues 254 to 275 (LQGE…GEES), 327 to 352 (EMEE…PESG), and 384 to 403 (ANTH…LQHL). At Ser-259 the chain carries Phosphoserine. The span at 262–275 (GEEEPETEPVGEES) shows a compositional bias: acidic residues. Residues 291–356 (RPRFTLQELR…PQPESGIKRL (66 aa)) enclose the RH2 domain. Residues 394-403 (EQGQEALQHL) show a composition bias toward polar residues.

It belongs to the RILPL family. As to quaternary structure, interacts (when S-nitrosylated) with GAPDH. Interacts with RAB8A; interaction is dependent on the phosphorylation of 'Thr-72' of RAB8A. Interacts with RAB10 and RAB12; the interaction is dependent on the phosphorylation of 'Thr-73' of RAB10, and 'Ser-105' of RAB12. In terms of processing, S-nitrosylation is required for the interaction with GAPDH. Widely expressed. Expressed at lower level in liver and kidney.

The protein localises to the cytoplasm. It is found in the cytosol. Its subcellular location is the cytoskeleton. The protein resides in the microtubule organizing center. It localises to the centrosome. The protein localises to the centriole. It is found in the cilium basal body. Plays a role in the regulation of cell shape and polarity. Plays a role in cellular protein transport, including protein transport away from primary cilia. Neuroprotective protein, which acts by sequestring GAPDH in the cytosol and prevent the apoptotic function of GAPDH in the nucleus. Competes with SIAH1 for binding GAPDH. Does not regulate lysosomal morphology and distribution. Binds to RAB10 following LRRK2-mediated RAB10 phosphorylation which leads to inhibition of ciliogenesis. The polypeptide is RILP-like protein 1 (RILPL1) (Homo sapiens (Human)).